Consider the following 341-residue polypeptide: Aspartate carbamoyltransferase catalytic subunit (341 aa).

Residues Arg-89 and Thr-90 each contribute to the carbamoyl phosphate site. Lys-117 contacts L-aspartate. Carbamoyl phosphate-binding residues include Arg-139, His-169, and Gln-172. 2 residues coordinate L-aspartate: Arg-202 and Arg-257. 2 residues coordinate carbamoyl phosphate: Gly-298 and Pro-299.

The protein belongs to the aspartate/ornithine carbamoyltransferase superfamily. ATCase family. As to quaternary structure, heterododecamer (2C3:3R2) of six catalytic PyrB chains organized as two trimers (C3), and six regulatory PyrI chains organized as three dimers (R2).

The catalysed reaction is carbamoyl phosphate + L-aspartate = N-carbamoyl-L-aspartate + phosphate + H(+). Its pathway is pyrimidine metabolism; UMP biosynthesis via de novo pathway; (S)-dihydroorotate from bicarbonate: step 2/3. In terms of biological role, catalyzes the condensation of carbamoyl phosphate and aspartate to form carbamoyl aspartate and inorganic phosphate, the committed step in the de novo pyrimidine nucleotide biosynthesis pathway. The protein is Aspartate carbamoyltransferase catalytic subunit of Paraburkholderia xenovorans (strain LB400).